Here is a 256-residue protein sequence, read N- to C-terminus: Thiazole synthase (256 aa).

Lys-95 functions as the Schiff-base intermediate with DXP in the catalytic mechanism. Residues Gly-156, 182–183 (AG), and 204–205 (NT) each bind 1-deoxy-D-xylulose 5-phosphate.

It belongs to the ThiG family. As to quaternary structure, homotetramer. Forms heterodimers with either ThiH or ThiS.

The protein localises to the cytoplasm. It carries out the reaction [ThiS sulfur-carrier protein]-C-terminal-Gly-aminoethanethioate + 2-iminoacetate + 1-deoxy-D-xylulose 5-phosphate = [ThiS sulfur-carrier protein]-C-terminal Gly-Gly + 2-[(2R,5Z)-2-carboxy-4-methylthiazol-5(2H)-ylidene]ethyl phosphate + 2 H2O + H(+). It participates in cofactor biosynthesis; thiamine diphosphate biosynthesis. In terms of biological role, catalyzes the rearrangement of 1-deoxy-D-xylulose 5-phosphate (DXP) to produce the thiazole phosphate moiety of thiamine. Sulfur is provided by the thiocarboxylate moiety of the carrier protein ThiS. In vitro, sulfur can be provided by H(2)S. The protein is Thiazole synthase of Escherichia coli O17:K52:H18 (strain UMN026 / ExPEC).